The primary structure comprises 112 residues: Large ribosomal subunit protein uL22 (112 aa).

This sequence belongs to the universal ribosomal protein uL22 family. In terms of assembly, part of the 50S ribosomal subunit.

This protein binds specifically to 23S rRNA; its binding is stimulated by other ribosomal proteins, e.g. L4, L17, and L20. It is important during the early stages of 50S assembly. It makes multiple contacts with different domains of the 23S rRNA in the assembled 50S subunit and ribosome. In terms of biological role, the globular domain of the protein is located near the polypeptide exit tunnel on the outside of the subunit, while an extended beta-hairpin is found that lines the wall of the exit tunnel in the center of the 70S ribosome. The chain is Large ribosomal subunit protein uL22 from Legionella pneumophila subsp. pneumophila (strain Philadelphia 1 / ATCC 33152 / DSM 7513).